The sequence spans 228 residues: Thermonuclease (228 aa).

The N-terminal stretch at 1 to 23 (MTEYLLSAGICMAIVSILLIGMA) is a signal peptide. A propeptide spanning residues 24–60 (ISNVSKGQYAKRFFFFATSCLVLTLVVVSSLSSSANA) is cleaved from the precursor. Over residues 58-70 (ANASQTDNGVNRS) the composition is skewed to polar residues. The segment at 58 to 83 (ANASQTDNGVNRSGSEDPTVYSATST) is disordered. Residue aspartate 100 coordinates Ca(2+). Arginine 114 is a catalytic residue. Aspartate 119 and threonine 120 together coordinate Ca(2+). Active-site residues include glutamate 122 and arginine 166.

This sequence belongs to the thermonuclease family. The cofactor is Ca(2+).

The protein localises to the secreted. The catalysed reaction is Endonucleolytic cleavage to nucleoside 3'-phosphates and 3'-phosphooligonucleotide end-products.. Enzyme that catalyzes the hydrolysis of both DNA and RNA at the 5' position of the phosphodiester bond. The protein is Thermonuclease (nuc) of Staphylococcus aureus (strain Mu50 / ATCC 700699).